A 433-amino-acid polypeptide reads, in one-letter code: Divergent protein kinase domain 2B (433 aa).

The first 29 residues, 1 to 29 (MEPRLGPKAAALHLGWPFLLLWVSGLSYS), serve as a signal peptide directing secretion. Asn-100 is a glycosylation site (N-linked (GlcNAc...) asparagine).

This sequence belongs to the DIPK family.

It localises to the secreted. The protein is Divergent protein kinase domain 2B (DIPK2B) of Bos taurus (Bovine).